The primary structure comprises 491 residues: 2-aminomuconic 6-semialdehyde dehydrogenase (491 aa).

Catalysis depends on residues Glu252 and Cys286.

It belongs to the aldehyde dehydrogenase family. In terms of assembly, homotrimer.

The enzyme catalyses 2-aminomuconate 6-semialdehyde + NAD(+) + H2O = (2Z,4E)-2-aminomuconate + NADH + 2 H(+). Strongly inhibited by Ag(+) and Hg(+), and comnpletely inhibited by p-chloromercuribenzoic acid. Functionally, involved in the modified meta-cleavage pathway for 2-aminophenol catabolism. The enzyme is also active toward 2-hydroxymuconic 6-semialdehyde, acetaldehyde, propionaldehyde, and butyraldehyde. In Pseudomonas sp, this protein is 2-aminomuconic 6-semialdehyde dehydrogenase (amnC).